The primary structure comprises 266 residues: HTH-type transcriptional regulator MurR (266 aa).

The region spanning 1 to 77 (MLYLTKIRNA…MALIGEYSAS (77 aa)) is the HTH rpiR-type domain. Positions 37–56 (SRQMAKQLGISQSSIVKFAQ) form a DNA-binding region, H-T-H motif. The region spanning 128 to 266 (IIEVISKAPF…LLFVGLVQHQ (139 aa)) is the SIS domain.

As to quaternary structure, homotetramer.

It participates in amino-sugar metabolism; N-acetylmuramate degradation [regulation]. In terms of biological role, represses the expression of the murPQ operon involved in the uptake and degradation of N-acetylmuramic acid (MurNAc). Binds to two adjacent inverted repeats within the operator region. MurNAc 6-phosphate, the substrate of MurQ, is the specific inducer that weakens binding of MurR to the operator. This is HTH-type transcriptional regulator MurR from Shigella flexneri serotype 5b (strain 8401).